The following is a 320-amino-acid chain: Protein MRH1 (320 aa).

Topologically, residues 1–34 are extracellular; the sequence is MSTFETLIKRGGNEAIKINPPTGADFHITSRGSD. Residues 35–55 traverse the membrane as a helical segment; the sequence is WFWTCFCCYLLFGLILTFLMF. The Cytoplasmic portion of the chain corresponds to 56–62; the sequence is RKPVNDR. The chain crosses the membrane as a helical span at residues 63-83; that stretch reads FFYLTGIAPNFFMCIAYFTMA. At 84 to 116 the chain is on the extracellular side; sequence SNLGWIPVKAKYNHVQTSTQKEHPGYRQIFYSR. Residues 117 to 137 form a helical membrane-spanning segment; it reads FVGWFLALPWPIIQICMLAGT. Over 138–141 the chain is Cytoplasmic; that stretch reads PFWQ. A helical membrane pass occupies residues 142–162; sequence MAFNVCITEFFTVCWLIAACV. The Extracellular portion of the chain corresponds to 163–167; the sequence is HSTYK. A helical transmembrane segment spans residues 168–188; it reads WGYYTIGLGAAIVVSISVMTT. The Cytoplasmic segment spans residues 189-204; the sequence is SYNLVKQRDNDIRLTF. Residues 205–225 traverse the membrane as a helical segment; that stretch reads LVFFSIIMFLWIIAYPTCFGI. At 226-238 the chain is on the extracellular side; it reads TDGGNVLQPDSAG. The helical transmembrane segment at 239–259 threads the bilayer; the sequence is IFYGIIDLILMCFIPTLLVPI. The Cytoplasmic segment spans residues 260-320; sequence ANHFGADKLG…KSKKSKKSEE (61 aa). Residues 285 to 320 are disordered; that stretch reads APVASPRPAATPNLSKDKKKKSKKSKKSKKSKKSEE. The residue at position 289 (Ser-289) is a Phosphoserine. Position 295 is a phosphothreonine (Thr-295). Phosphoserine is present on Ser-299. Residues 301 to 320 are compositionally biased toward basic residues; it reads DKKKKSKKSKKSKKSKKSEE.

It belongs to the archaeal/bacterial/fungal opsin family.

Its subcellular location is the cell membrane. It is found in the mitochondrion. The protein resides in the bud. The protein is Protein MRH1 (MRH1) of Saccharomyces cerevisiae (strain ATCC 204508 / S288c) (Baker's yeast).